The following is a 488-amino-acid chain: MSSPSLVELKAILRLAGPLIAAQLAYVAMVFTDTVMMGKLGPDALAAGGLGAVSYAFVSTFCVGVVAAVGNLVAIRHGCDDAAGAAAAARSGLWVGAALALAAGLLLWNLRPLLLVFGQAPQTVDGAMQFLHSLTFALPGYMAFMVLRGFTSAIDRAGPVMAISVLGALANLALNYSFIEGLFGLPRLGLAGIGLVTALVMNCMPLLLALYIRLQPAYAEYSLLRGLGRPQRAMVEEILRLGLPIGGTYAVESGMFTVATLCMGIIGDHALAAHQIAIQAVYVAFMVPVGLSYATTYRIGQHFGAGRLLEARRAGRVGIGFGALCMLLFAGLFWWMPEAIIGLFLDRDAPANREVAAMAVSLLAIAAWFELFDGTQNVAMGAIRGLKDARTTFLVGLACYWLVGVPLACLLAFAAGWGAAGVWWGLAGGLACAAIGLTLAFEWKTARLLPKATASEASALNCRAAGRGAPSARLCPGNAPVPPTAAAD.

12 consecutive transmembrane segments (helical) span residues 11 to 31 (AILRLAGPLIAAQLAYVAMVF), 55 to 75 (YAFVSTFCVGVVAAVGNLVAI), 97 to 117 (AALALAAGLLLWNLRPLLLVF), 127 to 147 (AMQFLHSLTFALPGYMAFMVL), 159 to 179 (PVMAISVLGALANLALNYSFI), 190 to 210 (LAGIGLVTALVMNCMPLLLAL), 247 to 267 (GTYAVESGMFTVATLCMGIIG), 271 to 291 (LAAHQIAIQAVYVAFMVPVGL), 317 to 337 (VGIGFGALCMLLFAGLFWWMP), 355 to 375 (VAAMAVSLLAIAAWFELFDGT), 393 to 413 (FLVGLACYWLVGVPLACLLAF), and 421 to 441 (GVWWGLAGGLACAAIGLTLAF).

Belongs to the multi antimicrobial extrusion (MATE) (TC 2.A.66.1) family.

It is found in the cell inner membrane. Multidrug efflux pump. This Pseudomonas aeruginosa (strain ATCC 15692 / DSM 22644 / CIP 104116 / JCM 14847 / LMG 12228 / 1C / PRS 101 / PAO1) protein is Probable multidrug resistance protein NorM (norM).